The following is a 38-amino-acid chain: Photosystem II reaction center protein L (38 aa).

The helical transmembrane segment at 17–37 (SLYFGLLLIFVLAVLFSSYIF) threads the bilayer.

This sequence belongs to the PsbL family. PSII is composed of 1 copy each of membrane proteins PsbA, PsbB, PsbC, PsbD, PsbE, PsbF, PsbH, PsbI, PsbJ, PsbK, PsbL, PsbM, PsbT, PsbX, PsbY, PsbZ, Psb30/Ycf12, at least 3 peripheral proteins of the oxygen-evolving complex and a large number of cofactors. It forms dimeric complexes.

Its subcellular location is the plastid. The protein resides in the chloroplast thylakoid membrane. One of the components of the core complex of photosystem II (PSII). PSII is a light-driven water:plastoquinone oxidoreductase that uses light energy to abstract electrons from H(2)O, generating O(2) and a proton gradient subsequently used for ATP formation. It consists of a core antenna complex that captures photons, and an electron transfer chain that converts photonic excitation into a charge separation. This subunit is found at the monomer-monomer interface and is required for correct PSII assembly and/or dimerization. The chain is Photosystem II reaction center protein L from Chlamydomonas moewusii (Chlamydomonas eugametos).